Reading from the N-terminus, the 320-residue chain is Cytochrome f (320 aa).

A signal peptide spans 1–35 (MQTINTFSWINQRITRSISVLLLVYIITRTSISSA). Residues tyrosine 36, cysteine 56, cysteine 59, and histidine 60 each contribute to the heme site. Residues 286–306 (VQGLLFFLASVILAQIFLVLK) traverse the membrane as a helical segment.

Belongs to the cytochrome f family. As to quaternary structure, the 4 large subunits of the cytochrome b6-f complex are cytochrome b6, subunit IV (17 kDa polypeptide, petD), cytochrome f and the Rieske protein, while the 4 small subunits are PetG, PetL, PetM and PetN. The complex functions as a dimer. Heme serves as cofactor.

Its subcellular location is the plastid thylakoid membrane. Functionally, component of the cytochrome b6-f complex, which mediates electron transfer between photosystem II (PSII) and photosystem I (PSI), cyclic electron flow around PSI, and state transitions. This is Cytochrome f from Cuscuta exaltata (Tall dodder).